A 279-amino-acid polypeptide reads, in one-letter code: Thioredoxin-like 1-1, chloroplastic (279 aa).

The Thioredoxin domain occupies 56–202 (ALTERKARPL…FKDALAKHGP (147 aa)). Catalysis depends on nucleophile residues C125 and C128. C125 and C128 are disulfide-bonded.

The protein belongs to the thioredoxin family.

In terms of biological role, probable thiol-disulfide oxidoreductase that may participate in various redox reactions. This is Thioredoxin-like 1-1, chloroplastic from Oryza sativa subsp. japonica (Rice).